The following is a 112-amino-acid chain: Peptidyl-tRNA hydrolase (112 aa).

Residues 64–99 (EEAKRAGLPTGLISDAGRTQLEPGTPTALAIGPAPD) form a disordered region.

This sequence belongs to the PTH2 family.

The protein localises to the cytoplasm. The catalysed reaction is an N-acyl-L-alpha-aminoacyl-tRNA + H2O = an N-acyl-L-amino acid + a tRNA + H(+). The natural substrate for this enzyme may be peptidyl-tRNAs which drop off the ribosome during protein synthesis. This chain is Peptidyl-tRNA hydrolase, found in Halobacterium salinarum (strain ATCC 29341 / DSM 671 / R1).